Reading from the N-terminus, the 442-residue chain is GTPase Der (442 aa).

2 consecutive EngA-type G domains span residues 3–167 (PTIV…PPDV) and 177–350 (PRIA…AAAM). GTP contacts are provided by residues 9–16 (GRPNVGKS), 56–60 (DTAGF), 119–122 (NKSE), 183–190 (GRPNVGKS), 230–234 (DTAGL), and 295–298 (NKWD). The 85-residue stretch at 351–435 (VNLSTPRLTR…PLRIQFRTAH (85 aa)) folds into the KH-like domain.

Belongs to the TRAFAC class TrmE-Era-EngA-EngB-Septin-like GTPase superfamily. EngA (Der) GTPase family. Associates with the 50S ribosomal subunit.

Its function is as follows. GTPase that plays an essential role in the late steps of ribosome biogenesis. This chain is GTPase Der, found in Aromatoleum aromaticum (strain DSM 19018 / LMG 30748 / EbN1) (Azoarcus sp. (strain EbN1)).